Reading from the N-terminus, the 262-residue chain is Acyl-[acyl-carrier-protein]--UDP-N-acetylglucosamine O-acyltransferase (262 aa).

Belongs to the transferase hexapeptide repeat family. LpxA subfamily. As to quaternary structure, homotrimer.

The protein resides in the cytoplasm. The catalysed reaction is a (3R)-hydroxyacyl-[ACP] + UDP-N-acetyl-alpha-D-glucosamine = a UDP-3-O-[(3R)-3-hydroxyacyl]-N-acetyl-alpha-D-glucosamine + holo-[ACP]. It functions in the pathway glycolipid biosynthesis; lipid IV(A) biosynthesis; lipid IV(A) from (3R)-3-hydroxytetradecanoyl-[acyl-carrier-protein] and UDP-N-acetyl-alpha-D-glucosamine: step 1/6. In terms of biological role, involved in the biosynthesis of lipid A, a phosphorylated glycolipid that anchors the lipopolysaccharide to the outer membrane of the cell. This Paraburkholderia phytofirmans (strain DSM 17436 / LMG 22146 / PsJN) (Burkholderia phytofirmans) protein is Acyl-[acyl-carrier-protein]--UDP-N-acetylglucosamine O-acyltransferase.